The following is a 678-amino-acid chain: NADPH--cytochrome P450 reductase (678 aa).

Residue G2 is modified to N-acetylglycine. Residues 2 to 22 lie on the Lumenal side of the membrane; it reads GDSNVDTGTTTSEMVAEEVSL. The chain crosses the membrane as a helical span at residues 23–43; that stretch reads FSATDMVLFSLIVGLLTYWFI. The Cytoplasmic segment spans residues 44–678; that stretch reads FRKKKDEVPE…KGRYSLDVWS (635 aa). Position 63 is a phosphoserine (S63). Positions 80–224 constitute a Flavodoxin-like domain; that stretch reads IIVFYGSQTG…DFITWREQFW (145 aa). FMN contacts are provided by residues 86 to 91, 138 to 141, 173 to 182, and D208; these read SQTGTA, ATYG, and LGNKTYEHFN. The FAD-binding FR-type domain maps to 279–521; that stretch reads KNPFLAVVTT…FVRKSQFRLP (243 aa). R298 contributes to the NADP(+) binding site. FAD-binding positions include R424, 454-457, 472-474, Y478, and 488-491; these read RYYS, CAV, and GVAT. Residues T535, 596-597, 602-606, and D639 contribute to the NADP(+) site; these read SR and KVYVQ. Position 677 (W677) interacts with FAD.

It belongs to the NADPH--cytochrome P450 reductase family. The protein in the N-terminal section; belongs to the flavodoxin family. In the C-terminal section; belongs to the flavoprotein pyridine nucleotide cytochrome reductase family. The cofactor is FAD. FMN serves as cofactor.

The protein localises to the endoplasmic reticulum membrane. It catalyses the reaction 2 oxidized [cytochrome P450] + NADPH = 2 reduced [cytochrome P450] + NADP(+) + H(+). Its function is as follows. This enzyme is required for electron transfer from NADP to cytochrome P450 in microsomes. It can also provide electron transfer to heme oxygenase and cytochrome B5. This Sus scrofa (Pig) protein is NADPH--cytochrome P450 reductase.